The primary structure comprises 315 residues: 4-hydroxy-3-methylbut-2-enyl diphosphate reductase (315 aa).

Cys12 provides a ligand contact to [4Fe-4S] cluster. (2E)-4-hydroxy-3-methylbut-2-enyl diphosphate is bound by residues His41 and His74. Dimethylallyl diphosphate-binding residues include His41 and His74. 2 residues coordinate isopentenyl diphosphate: His41 and His74. Cys96 is a binding site for [4Fe-4S] cluster. (2E)-4-hydroxy-3-methylbut-2-enyl diphosphate is bound at residue His124. His124 is a dimethylallyl diphosphate binding site. Residue His124 participates in isopentenyl diphosphate binding. Catalysis depends on Glu126, which acts as the Proton donor. Residue Thr168 coordinates (2E)-4-hydroxy-3-methylbut-2-enyl diphosphate. Cys198 contacts [4Fe-4S] cluster. (2E)-4-hydroxy-3-methylbut-2-enyl diphosphate-binding residues include Ser226, Ser227, Asn228, and Ser270. The dimethylallyl diphosphate site is built by Ser226, Ser227, Asn228, and Ser270. Residues Ser226, Ser227, Asn228, and Ser270 each contribute to the isopentenyl diphosphate site.

Belongs to the IspH family. The cofactor is [4Fe-4S] cluster.

The enzyme catalyses isopentenyl diphosphate + 2 oxidized [2Fe-2S]-[ferredoxin] + H2O = (2E)-4-hydroxy-3-methylbut-2-enyl diphosphate + 2 reduced [2Fe-2S]-[ferredoxin] + 2 H(+). It catalyses the reaction dimethylallyl diphosphate + 2 oxidized [2Fe-2S]-[ferredoxin] + H2O = (2E)-4-hydroxy-3-methylbut-2-enyl diphosphate + 2 reduced [2Fe-2S]-[ferredoxin] + 2 H(+). It functions in the pathway isoprenoid biosynthesis; dimethylallyl diphosphate biosynthesis; dimethylallyl diphosphate from (2E)-4-hydroxy-3-methylbutenyl diphosphate: step 1/1. Its pathway is isoprenoid biosynthesis; isopentenyl diphosphate biosynthesis via DXP pathway; isopentenyl diphosphate from 1-deoxy-D-xylulose 5-phosphate: step 6/6. Functionally, catalyzes the conversion of 1-hydroxy-2-methyl-2-(E)-butenyl 4-diphosphate (HMBPP) into a mixture of isopentenyl diphosphate (IPP) and dimethylallyl diphosphate (DMAPP). Acts in the terminal step of the DOXP/MEP pathway for isoprenoid precursor biosynthesis. This chain is 4-hydroxy-3-methylbut-2-enyl diphosphate reductase, found in Pseudomonas putida (strain ATCC 700007 / DSM 6899 / JCM 31910 / BCRC 17059 / LMG 24140 / F1).